We begin with the raw amino-acid sequence, 339 residues long: uncharacterized protein (339 aa).

This is an uncharacterized protein from Treponema pallidum (strain Nichols).